A 199-amino-acid chain; its full sequence is Large ribosomal subunit protein bL9 (199 aa).

A disordered region spans residues Thr-169 to Ala-199.

It belongs to the bacterial ribosomal protein bL9 family.

Binds to the 23S rRNA. The polypeptide is Large ribosomal subunit protein bL9 (Novosphingobium aromaticivorans (strain ATCC 700278 / DSM 12444 / CCUG 56034 / CIP 105152 / NBRC 16084 / F199)).